Consider the following 263-residue polypeptide: Gap junction beta-6 protein (263 aa).

Over 1-19 (MDWGALQTILGGVNKHSTS) the chain is Cytoplasmic. Residues 20-40 (IGKIWLTVLFIFRIMILVVAA) traverse the membrane as a helical segment. Residues 41–75 (ERVWGDEQDDFICNTLQPGCKNVCYDHFFPISHIR) are Extracellular-facing. The chain crosses the membrane as a helical span at residues 76–96 (LWALQLIFVSTPALLVAMHVA). At 97–137 (YRRHEKKRQFRKGDQKCEYKDIEEIRTQRFRIEGTLWWTYT) the chain is on the cytoplasmic side. The helical transmembrane segment at 138–158 (CSIFFRLVFEAVFMYAFYFMY) threads the bilayer. The Extracellular segment spans residues 159-189 (DGFRMPRLMKCSAWPCPNTVDCFVSRPTEKT). A helical transmembrane segment spans residues 190 to 210 (VFTIFMIAVSSICILLNVAEL). Topologically, residues 211–263 (CYLLTKFFLRRSRKAGNQKHHPNHENKEETKQNEMNELISDSCQNTVIGFTSS) are cytoplasmic.

The protein belongs to the connexin family. Beta-type (group I) subfamily. As to quaternary structure, a connexon is composed of a hexamer of connexins. As to expression, exclusively expressed in the cochlea of the inner ear, where it is found in cells of the tegmentum vasculosum, cuboidal cells, supporting cells and clear cells.

Its subcellular location is the cell membrane. The protein localises to the cell junction. It localises to the gap junction. One gap junction consists of a cluster of closely packed pairs of transmembrane channels, the connexons, through which materials of low MW diffuse from one cell to a neighboring cell. The sequence is that of Gap junction beta-6 protein (GJB6) from Gallus gallus (Chicken).